The primary structure comprises 375 residues: Alcohol dehydrogenase 3, mitochondrial (375 aa).

The transit peptide at 1-24 (MLRTSTLFTRRVQPSLFSRNILRL) directs the protein to the mitochondrion. A Zn(2+)-binding site is contributed by cysteine 71. Histidine 72, threonine 73, and histidine 76 together coordinate NAD(+). 7 residues coordinate Zn(2+): histidine 94, glutamate 95, cysteine 125, cysteine 128, cysteine 131, cysteine 139, and cysteine 181. Positions 208, 209, 210, 229, 234, 249, 296, 321, 323, and 368 each coordinate NAD(+).

It belongs to the zinc-containing alcohol dehydrogenase family. In terms of assembly, homotetramer. The cofactor is Zn(2+).

The protein localises to the mitochondrion matrix. It is found in the mitochondrion inner membrane. It carries out the reaction a primary alcohol + NAD(+) = an aldehyde + NADH + H(+). The catalysed reaction is a secondary alcohol + NAD(+) = a ketone + NADH + H(+). It catalyses the reaction ethanol + NAD(+) = acetaldehyde + NADH + H(+). The enzyme catalyses butan-1-ol + NAD(+) = butanal + NADH + H(+). It carries out the reaction hexan-1-ol + NAD(+) = hexanal + NADH + H(+). Mitochondrial isozyme that reduces acetaldehyde to ethanol during the fermentation of glucose. Involved in the shuttling of mitochondrial reducing equivalents to the cytosol, where the redox balance is restored by NADH dehydrogenases on the external side of the mitochondrial inner membrane. Shows a high affinity for alcohols with a double bond conjugated to the alcohol group. This is Alcohol dehydrogenase 3, mitochondrial (ADH3) from Saccharomyces cerevisiae (strain ATCC 204508 / S288c) (Baker's yeast).